Consider the following 43-residue polypeptide: Cytochrome b559 subunit beta (43 aa).

Residues 18–34 (WLAIHGLAIPTVFFFGA) form a helical membrane-spanning segment. His-22 contacts heme.

It belongs to the PsbE/PsbF family. In terms of assembly, heterodimer of an alpha subunit and a beta subunit. PSII is composed of 1 copy each of membrane proteins PsbA, PsbB, PsbC, PsbD, PsbE, PsbF, PsbH, PsbI, PsbJ, PsbK, PsbL, PsbM, PsbT, PsbY, PsbZ, Psb30/Ycf12, at least 3 peripheral proteins of the oxygen-evolving complex and a large number of cofactors. It forms dimeric complexes. Requires heme b as cofactor.

The protein resides in the plastid. The protein localises to the chloroplast thylakoid membrane. In terms of biological role, this b-type cytochrome is tightly associated with the reaction center of photosystem II (PSII). PSII is a light-driven water:plastoquinone oxidoreductase that uses light energy to abstract electrons from H(2)O, generating O(2) and a proton gradient subsequently used for ATP formation. It consists of a core antenna complex that captures photons, and an electron transfer chain that converts photonic excitation into a charge separation. This chain is Cytochrome b559 subunit beta, found in Cyanidium caldarium (Red alga).